A 90-amino-acid chain; its full sequence is Small ribosomal subunit protein bS16 (90 aa).

It belongs to the bacterial ribosomal protein bS16 family.

The protein is Small ribosomal subunit protein bS16 of Lactobacillus delbrueckii subsp. bulgaricus (strain ATCC 11842 / DSM 20081 / BCRC 10696 / JCM 1002 / NBRC 13953 / NCIMB 11778 / NCTC 12712 / WDCM 00102 / Lb 14).